The primary structure comprises 1042 residues: Ribosome biogenesis protein NOC1 (1042 aa).

Disordered stretches follow at residues 1 to 20 (MGLK…AFDE), 28 to 79 (GKID…AAKD), 101 to 128 (LVAD…SLDQ), 148 to 214 (NRED…IPQD), 546 to 567 (LNGD…GSLT), and 897 to 1020 (GKMT…LKTL). 2 stretches are compositionally biased toward basic and acidic residues: residues 9 to 18 (QQRDIGKPAF) and 63 to 79 (HPTE…AAKD). Over residues 118–128 (PKISSEQSLDQ) the composition is skewed to polar residues. Acidic residues-rich tracts occupy residues 153-164 (NTEDEASPDEDA) and 173-194 (SDSD…SFSD). A compositionally biased stretch (basic and acidic residues) spans 195–207 (NEEKVTEKVDSGE). Basic and acidic residues predominate over residues 902–911 (KRDETKREFG). The segment covering 937–957 (NVDDDSDADLGDFDYSDDEED) has biased composition (acidic residues). Positions 962 to 972 (DGSMSDIGMDS) are enriched in low complexity. The span at 978 to 994 (IFDDAGESDEQSSGEDE) shows a compositional bias: acidic residues.

This sequence belongs to the CBF/MAK21 family. In terms of assembly, interacts with NOC2. Forms a nucleolar complex with NOC2 that binds to 90S and 66S pre-ribosomes.

The protein resides in the nucleus. It localises to the nucleolus. In terms of biological role, required for 60S ribosomal subunit synthesis. The sequence is that of Ribosome biogenesis protein NOC1 (NOC1) from Chaetomium thermophilum (strain DSM 1495 / CBS 144.50 / IMI 039719) (Thermochaetoides thermophila).